Reading from the N-terminus, the 683-residue chain is FAD-binding monooxygenase ausC (683 aa).

Residue Asn5 is glycosylated (N-linked (GlcNAc...) asparagine). A helical membrane pass occupies residues 111–131 (ILIIGAGFGGLLFAVRLIQTG). Residues 150-153 (TWYW), 162-163 (DT), and Tyr168 contribute to the FAD site. 160-162 (MCD) contributes to the NADP(+) binding site. N-linked (GlcNAc...) asparagine glycosylation is present at Asn286. NADP(+) is bound by residues 310-316 (TGASAVQ) and 333-334 (RT). N-linked (GlcNAc...) asparagine glycosylation is found at Asn525 and Asn572.

This sequence belongs to the FAD-binding monooxygenase family. FAD is required as a cofactor.

It is found in the membrane. It catalyses the reaction preaustinoid A + AH2 + O2 = preaustinoid A1 + A + H2O. It participates in secondary metabolite biosynthesis; terpenoid biosynthesis. Functionally, FAD-binding monooxygenase; part of the gene cluster A that mediates the biosynthesis of austinol and dehydroaustinol, two fungal meroterpenoids. The first step of the pathway is the synthesis of 3,5-dimethylorsellinic acid by the polyketide synthase ausA. 3,5-dimethylorsellinic acid is then prenylated by the polyprenyl transferase ausN. Further epoxidation by the FAD-dependent monooxygenase ausM and cyclization by the probable terpene cyclase ausL lead to the formation of protoaustinoid A. Protoaustinoid A is then oxidized to spiro-lactone preaustinoid A3 by the combined action of the FAD-binding monooxygenases ausB and ausC, and the dioxygenase ausE. Acid-catalyzed keto-rearrangement and ring contraction of the tetraketide portion of preaustinoid A3 by ausJ lead to the formation of preaustinoid A4. The aldo-keto reductase ausK, with the help of ausH, is involved in the next step by transforming preaustinoid A4 into isoaustinone which is in turn hydroxylated by the P450 monooxygenase ausI to form austinolide. Finally, the cytochrome P450 monooxygenase ausG modifies austinolide to austinol. Austinol can be further modified to dehydroaustinol which forms a diffusible complex with diorcinol that initiates conidiation. Due to genetic rearrangements of the clusters and the subsequent loss of some enzymes, the end products of the Emericella nidulans austinoid biosynthesis clusters are austinol and dehydroaustinol, even if additional enzymes, such as the O-acetyltransferase ausQ and the cytochrome P450 monooxygenase ausR are still functional. This Emericella nidulans (strain FGSC A4 / ATCC 38163 / CBS 112.46 / NRRL 194 / M139) (Aspergillus nidulans) protein is FAD-binding monooxygenase ausC.